A 1531-amino-acid chain; its full sequence is Multidrug resistance-associated protein 1 (1531 aa).

Topologically, residues 1–33 (MALRGFCSADGSDPLWDWNVTWNTSNPDFTKCF) are extracellular. N-linked (GlcNAc...) asparagine glycans are attached at residues Asn19 and Asn23. The helical transmembrane segment at 34-54 (QNTVLVWVPCFYLWACFPFYF) threads the bilayer. The Cytoplasmic portion of the chain corresponds to 55 to 74 (LYLSRHDRGYIQMTPLNKTK). A helical transmembrane segment spans residues 75 to 95 (TALGFLLWIVCWADLFYSFWE). At 96-100 (RSRGI) the chain is on the extracellular side. A helical membrane pass occupies residues 101-121 (FLAPVFLVSPTLLGITMLLAT). The Cytoplasmic portion of the chain corresponds to 122–133 (FLIQLERRKGVQ). A helical transmembrane segment spans residues 134-154 (SSGIMLTFWLVALVCALAILR). The Extracellular portion of the chain corresponds to 155 to 172 (SKIMTALKEDAQVDLFRD). A helical membrane pass occupies residues 173–193 (ITFYVYFSLLLIQLVLSCFSD). Topologically, residues 194–316 (RSPLFSETIH…KEWNPSLFKV (123 aa)) are cytoplasmic. A Phosphotyrosine modification is found at Tyr277. Ser289 is modified (phosphoserine). Residues 317–337 (LYKTFGPYFLMSFFFKAIHDL) form a helical membrane-spanning segment. The region spanning 325–608 (FLMSFFFKAI…LPMVISSIVQ (284 aa)) is the ABC transmembrane type-1 1 domain. The Extracellular segment spans residues 338–363 (MMFSGPQILKLLIKFVNDTKAPDWQG). A helical transmembrane segment spans residues 364–384 (YFYTVLLFVTACLQTLVLHQY). Residues 385 to 440 (FHICFVSGMRIKTAVIGAVYRKALVITNSARKSSTVGEIVNLMSVDAQRFMDLATY) lie on the Cytoplasmic side of the membrane. Residues 441–461 (INMIWSAPLQVILALYLLWLN) form a helical membrane-spanning segment. At 462–464 (LGP) the chain is on the extracellular side. The helical transmembrane segment at 465–485 (SVLAGVAVMVLMVPVNAVMAM) threads the bilayer. Over 486 to 547 (KTKTYQVAHM…VLKKSAYLSA (62 aa)) the chain is Cytoplasmic. Lys503 is modified (N6-succinyllysine). Residues 548–568 (VGTFTWVCTPFLVALCTFAVY) form a helical membrane-spanning segment. Over 569–590 (VTIDENNILDAQTAFVSLALFN) the chain is Extracellular. Residues 591–611 (ILRFPLNILPMVISSIVQASV) traverse the membrane as a helical segment. Topologically, residues 612 to 967 (SLKRLRIFLS…VKLSVYWDYM (356 aa)) are cytoplasmic. The 225-residue stretch at 644–868 (ITVRNATFTW…DGAFAEFLRT (225 aa)) folds into the ABC transporter 1 domain. ATP is bound by residues Trp653, 678–685 (GQVGCGKS), and Gln713. Ser905, Ser915, and Ser930 each carry phosphoserine. A helical transmembrane segment spans residues 968–988 (KAIGLFISFLSIFLFMCNHVS). The region spanning 975-1256 (SFLSIFLFMC…LVRMSSEMET (282 aa)) is the ABC transmembrane type-1 2 domain. The Extracellular segment spans residues 989-1025 (ALASNYWLSLWTDDPIVNGTQEHTKVRLSVYGALGIS). Asn1006 is a glycosylation site (N-linked (GlcNAc...) asparagine). A helical membrane pass occupies residues 1026–1046 (QGIAVFGYSMAVSIGGILASR). Topologically, residues 1047-1089 (CLHVDLLHSILRSPMSFFERTPSGNLVNRFSKELDTVDSMIPE) are cytoplasmic. Residues 1090 to 1110 (VIKMFMGSLFNVIGACIVILL) traverse the membrane as a helical segment. Residue Ala1111 is a topological domain, extracellular. The chain crosses the membrane as a helical span at residues 1112-1132 (TPIAAIIIPPLGLIYFFVQRF). Residues 1133 to 1203 (YVASSRQLKR…VANRWLAVRL (71 aa)) lie on the Cytoplasmic side of the membrane. Residues 1204–1224 (ECVGNCIVLFAALFAVISRHS) traverse the membrane as a helical segment. Residues 1225–1226 (LS) are Extracellular-facing. The helical transmembrane segment at 1227–1247 (AGLVGLSVSYSLQVTTYLNWL) threads the bilayer. Topologically, residues 1248–1531 (VRMSSEMETN…YSMAKDAGLV (284 aa)) are cytoplasmic. The ABC transporter 2 domain maps to 1293-1527 (VEFRNYCLRY…RGLFYSMAKD (235 aa)). 1327-1334 (GRTGAGKS) lines the ATP pocket.

This sequence belongs to the ABC transporter superfamily. ABCC family. Conjugate transporter (TC 3.A.1.208) subfamily. In terms of assembly, (Microbial infection) Interacts with human cytomegalovirus protein UL138; this interaction mediates MRP1 degradation via the lysosome. In terms of tissue distribution, lung, testis and peripheral blood mononuclear cells.

It is found in the cell membrane. Its subcellular location is the basolateral cell membrane. The enzyme catalyses ATP + H2O + xenobioticSide 1 = ADP + phosphate + xenobioticSide 2.. It carries out the reaction an S-substituted glutathione(in) + ATP + H2O = an S-substituted glutathione(out) + ADP + phosphate + H(+). It catalyses the reaction sphing-4-enine 1-phosphate(in) + ATP + H2O = sphing-4-enine 1-phosphate(out) + ADP + phosphate + H(+). The catalysed reaction is leukotriene C4(in) + ATP + H2O = leukotriene C4(out) + ADP + phosphate + H(+). The enzyme catalyses 17beta-estradiol 17-O-(beta-D-glucuronate)(in) + ATP + H2O = 17beta-estradiol 17-O-(beta-D-glucuronate)(out) + ADP + phosphate + H(+). It carries out the reaction daunorubicin(in) + ATP + H2O = daunorubicin(out) + ADP + phosphate + H(+). It catalyses the reaction vincristine(in) + ATP + H2O = vincristine(out) + ADP + phosphate + H(+). The catalysed reaction is 2',3'-cGAMP(in) + ATP + H2O = 2',3'-cGAMP(out) + ADP + phosphate + H(+). The enzyme catalyses S-[(2E,6E,10E)-geranylgeranyl]-L-glutathione(in) + ATP + H2O = S-[(2E,6E,10E)-geranylgeranyl]-L-glutathione(out) + ADP + phosphate + H(+). It carries out the reaction prostaglandin A2-S-(R)-glutathione(in) + ATP + H2O = prostaglandin A2-S-(R)-glutathione(out) + ADP + phosphate + H(+). It catalyses the reaction prostaglandin A2-S-(S)-glutathione(in) + ATP + H2O = prostaglandin A2-S-(S)-glutathione(out) + ADP + phosphate + H(+). MK 571 inhibits sphingosine 1-phosphate and leukotriene C4 export. Functionally, mediates export of organic anions and drugs from the cytoplasm. Mediates ATP-dependent transport of glutathione and glutathione conjugates, leukotriene C4, estradiol-17-beta-o-glucuronide, methotrexate, antiviral drugs and other xenobiotics. Confers resistance to anticancer drugs by decreasing accumulation of drug in cells, and by mediating ATP- and GSH-dependent drug export. Hydrolyzes ATP with low efficiency. Catalyzes the export of sphingosine 1-phosphate from mast cells independently of their degranulation. Participates in inflammatory response by allowing export of leukotriene C4 from leukotriene C4-synthesizing cells. Mediates ATP-dependent, GSH-independent cyclic GMP-AMP (cGAMP) export. Thus, by limiting intracellular cGAMP concentrations negatively regulates the cGAS-STING pathway. Exports S-geranylgeranyl-glutathione (GGG) in lymphoid cells and stromal compartments of lymphoid organs. ABCC1 (via extracellular transport) with GGT5 (via GGG catabolism) establish GGG gradients within lymphoid tissues to position P2RY8-positive lymphocytes at germinal centers in lymphoid follicles and restrict their chemotactic transmigration from blood vessels to the bone marrow parenchyma. Mediates basolateral export of GSH-conjugated R- and S-prostaglandin A2 diastereomers in polarized epithelial cells. This chain is Multidrug resistance-associated protein 1, found in Homo sapiens (Human).